A 58-amino-acid chain; its full sequence is Amyloid-beta precursor protein (58 aa).

Residues 1–34 (ISEVKMDAEFRHDSGYEVHHQKLVFFAEDVGSNK) are Extracellular-facing. 4 residues coordinate Cu(2+): histidine 12, tyrosine 16, histidine 19, and histidine 20. Zn(2+) is bound by residues histidine 12, tyrosine 16, histidine 19, and histidine 20. A helical membrane pass occupies residues 35–58 (GAIIGLMVGGVVIATVIVITLVML).

This sequence belongs to the APP family. In terms of assembly, binds, via its C-terminus, to the PID domain of several cytoplasmic proteins, including APBB family members, the APBA family, MAPK8IP1, SHC1 and NUMB and DAB1. Binding to DAB1 inhibits its serine phosphorylation. Interacts (via NPXY motif) with DAB2 (via PID domain); the interaction is impaired by tyrosine phosphorylation of the NPXY motif. Also interacts with GPCR-like protein BPP, APPBP1, IB1, KNS2 (via its TPR domains), APPBP2 (via BaSS) and DDB1. In vitro, it binds MAPT via the MT-binding domains. Associates with microtubules in the presence of ATP and in a kinesin-dependent manner. Interacts, through a C-terminal domain, with GNAO1. Interacts with CPEB1, ANKS1B and AGER. Interacts with ITM2B. Interacts with ITM2C. Interacts with IDE. Can form homodimers; dimerization is enhanced in the presence of Cu(2+) ions. Can form homodimers; this is promoted by heparin binding. Interacts with SORL1 (via N-terminal ectodomain); this interaction retains APP in the trans-Golgi network and reduces processing into soluble APP-alpha and amyloid-beta peptides. Interacts with PLD3. Interacts with VDAC1. Interacts with NSG1; could regulate APP processing. Amyloid-beta protein 42 interacts with FPR2. Interacts with LRRK2. Interacts (via cytoplasmic domain) with KIF5B. Interacts (via C-terminus) with APBB2/FE65L1 (via C-terminus). Interacts (via intracellular domain) with APBB3. In terms of processing, proteolytically processed under normal cellular conditions. Cleavage either by alpha-secretase, beta-secretase or theta-secretase leads to generation and extracellular release of soluble APP peptides, S-APP-alpha and S-APP-beta, and the retention of corresponding membrane-anchored C-terminal fragments, C80, C83 and C99. Subsequent processing of C80 and C83 by gamma-secretase yields P3 peptides. This is the major secretory pathway and is non-amyloidogenic. Alternatively, presenilin/nicastrin-mediated gamma-secretase processing of C99 releases the amyloid-beta proteins, amyloid-beta protein 40 and amyloid-beta protein 42, major components of amyloid plaques, and the cytotoxic C-terminal fragments, gamma-CTF(50), gamma-CTF(57) and gamma-CTF(59). PSEN1 cleavage is more efficient with C83 than with C99 as substrate (in vitro). Amyloid-beta protein 40 and Amyloid-beta protein 42 are cleaved by ACE. Many other minor amyloid-beta peptides, amyloid-beta 1-X peptides, are found in cerebral spinal fluid (CSF) including the amyloid-beta X-15 peptides, produced from the cleavage by alpha-secretase.

It localises to the cell membrane. The protein resides in the membrane. It is found in the perikaryon. Its subcellular location is the cell projection. The protein localises to the growth cone. It localises to the clathrin-coated pit. The protein resides in the early endosome. It is found in the cytoplasmic vesicle. Its subcellular location is the secreted. The protein localises to the cell surface. It localises to the nucleus. The protein resides in the cytoplasm. Functionally, functions as a cell surface receptor and performs physiological functions on the surface of neurons relevant to neurite growth, neuronal adhesion and axonogenesis. Interaction between APP molecules on neighboring cells promotes synaptogenesis. Involved in cell mobility and transcription regulation through protein-protein interactions. Can promote transcription activation through binding to APBB1-KAT5 and inhibit Notch signaling through interaction with Numb. Couples to apoptosis-inducing pathways such as those mediated by G(o) and JIP. Inhibits G(o)-alpha ATPase activity. Acts as a kinesin I membrane receptor, mediating the axonal transport of beta-secretase and presenilin 1. By acting as a kinesin I membrane receptor, plays a role in axonal anterograde transport of cargo towards synapses in axons. May be involved in copper homeostasis/oxidative stress through copper ion reduction. In vitro, copper-metallated APP induces neuronal death directly or is potentiated through Cu(2+)-mediated low-density lipoprotein oxidation. Can regulate neurite outgrowth through binding to components of the extracellular matrix such as heparin and collagen I and IV. Induces a AGER-dependent pathway that involves activation of p38 MAPK, resulting in internalization of amyloid-beta peptide and mitochondrial dysfunction in cultured cortical neurons. Provides Cu(2+) ions for GPC1 which are required for release of nitric oxide (NO) and subsequent degradation of the heparan sulfate chains on GPC1. This Canis lupus familiaris (Dog) protein is Amyloid-beta precursor protein (APP).